The sequence spans 1106 residues: Protein transport protein Sec31A (1106 aa).

WD repeat units follow at residues 4 to 47 (KEVD…EIFE), 68 to 111 (RYHK…AGDK), 120 to 160 (KHTG…TPMT), 166 to 206 (QPPE…PIIK), 209 to 254 (DHSN…SPLR), 258 to 298 (NHAR…VLYE), and 301 to 342 (TNTQ…DGLR). The interaction with SEC13 stretch occupies residues 161 to 471 (PGAKTQPPED…IDASQTEFEK (311 aa)). A WD 8; interaction with SEC13 repeat occupies 397–430 (SFSFGGKLVTFENVRMPSHQGAEQQQQQHHVFIS). A phosphoserine mark is found at serine 527 and serine 532. Lysine 647 participates in a covalent cross-link: Glycyl lysine isopeptide (Lys-Gly) (interchain with G-Cter in ubiquitin). A Phosphoserine modification is found at serine 799. Residues 800–999 (PKIPYEEQQL…TKKITKKPIP (200 aa)) form an interaction with PDCD6 region. Residues 842 to 848 (GFIMHGN) carry the ALG-2-binding site motif-2 (ABS-2) motif. Residues 859 to 980 (TSPGHMHTQV…EGAPGAPIGN (122 aa)) are disordered. Residues 917–939 (PQSQMLQQQPSAPVPLSSQSSFP) show a composition bias toward polar residues. At threonine 1047 the chain carries Phosphothreonine. At serine 1049 the chain carries Phosphoserine. Residue lysine 1103 forms a Glycyl lysine isopeptide (Lys-Gly) (interchain with G-Cter in ubiquitin) linkage.

Belongs to the WD repeat SEC31 family. In terms of assembly, COPII is composed of at least 5 proteins: the SEC23/24 complex, the SEC13/31 complex and SAR1. SEC13 and SEC31 make a 2:2 tetramer that forms the edge element of the COPII outer coat. The tetramer self-assembles in multiple copies to form the complete polyhedral cage. Interacts (via WD 8) with SEC13. Interacts with PDCD6; interaction takes place in response to cytosolic calcium increase and leads to bridge together the BCR(KLHL12) complex and SEC31A, leading to monoubiquitination. Interacts with KLHL12. Monoubiquitinated by the BCR(KLHL12) E3 ubiquitin ligase complex, leading to regulate the size of COPII coats.

It localises to the cytoplasm. It is found in the cytoplasmic vesicle. The protein resides in the COPII-coated vesicle membrane. Its subcellular location is the endoplasmic reticulum membrane. Component of the coat protein complex II (COPII) which promotes the formation of transport vesicles from the endoplasmic reticulum (ER). The coat has two main functions, the physical deformation of the endoplasmic reticulum membrane into vesicles and the selection of cargo molecules. The protein is Protein transport protein Sec31A (SEC31A) of Pongo abelii (Sumatran orangutan).